A 135-amino-acid chain; its full sequence is Large-conductance mechanosensitive channel (135 aa).

2 consecutive transmembrane segments (helical) span residues 10–30 (FAMK…AAFG) and 76–96 (GAFI…FCAI).

The protein belongs to the MscL family. Homopentamer.

The protein resides in the cell inner membrane. Its function is as follows. Channel that opens in response to stretch forces in the membrane lipid bilayer. May participate in the regulation of osmotic pressure changes within the cell. The sequence is that of Large-conductance mechanosensitive channel from Proteus mirabilis (strain HI4320).